Here is a 283-residue protein sequence, read N- to C-terminus: 3-methyl-2-oxobutanoate hydroxymethyltransferase (283 aa).

The Mg(2+) site is built by Asp-44 and Asp-83. Residues 44–45 (DS), Asp-83, and Lys-112 contribute to the 3-methyl-2-oxobutanoate site. Mg(2+) is bound at residue Glu-114. The active-site Proton acceptor is Glu-181.

Belongs to the PanB family. As to quaternary structure, homodecamer; pentamer of dimers. Mg(2+) serves as cofactor.

It is found in the cytoplasm. It catalyses the reaction 3-methyl-2-oxobutanoate + (6R)-5,10-methylene-5,6,7,8-tetrahydrofolate + H2O = 2-dehydropantoate + (6S)-5,6,7,8-tetrahydrofolate. Its pathway is cofactor biosynthesis; coenzyme A biosynthesis. Catalyzes the reversible reaction in which hydroxymethyl group from 5,10-methylenetetrahydrofolate is transferred onto alpha-ketoisovalerate to form ketopantoate. In Pyrococcus furiosus (strain ATCC 43587 / DSM 3638 / JCM 8422 / Vc1), this protein is 3-methyl-2-oxobutanoate hydroxymethyltransferase.